The sequence spans 392 residues: 8-amino-7-oxononanoate synthase (392 aa).

Residue Arg-26 participates in substrate binding. 113 to 114 is a binding site for pyridoxal 5'-phosphate; sequence GY. Residue His-138 coordinates substrate. Pyridoxal 5'-phosphate is bound by residues Ser-186, His-214, and Thr-241. At Lys-244 the chain carries N6-(pyridoxal phosphate)lysine. Thr-353 is a substrate binding site.

Belongs to the class-II pyridoxal-phosphate-dependent aminotransferase family. BioF subfamily. In terms of assembly, homodimer. It depends on pyridoxal 5'-phosphate as a cofactor.

It carries out the reaction 6-carboxyhexanoyl-[ACP] + L-alanine + H(+) = (8S)-8-amino-7-oxononanoate + holo-[ACP] + CO2. It participates in cofactor biosynthesis; biotin biosynthesis. In terms of biological role, catalyzes the decarboxylative condensation of pimeloyl-[acyl-carrier protein] and L-alanine to produce 8-amino-7-oxononanoate (AON), [acyl-carrier protein], and carbon dioxide. The protein is 8-amino-7-oxononanoate synthase of Maricaulis maris (strain MCS10) (Caulobacter maris).